The following is a 263-amino-acid chain: Phosphatidylglycerol--prolipoprotein diacylglyceryl transferase (263 aa).

Transmembrane regions (helical) follow at residues 7–27 (IFSI…LGIV), 50–70 (LLTA…VLIY), 85–105 (TWKG…AVII), and 112–132 (IPIF…LFLG). Arg133 is an a 1,2-diacyl-sn-glycero-3-phospho-(1'-sn-glycerol) binding site. A run of 3 helical transmembrane segments spans residues 169 to 189 (LYEA…LFFL), 197 to 217 (GTLT…VEFF), and 233 to 253 (MGQL…LSAL).

This sequence belongs to the Lgt family.

It is found in the cell membrane. The catalysed reaction is L-cysteinyl-[prolipoprotein] + a 1,2-diacyl-sn-glycero-3-phospho-(1'-sn-glycerol) = an S-1,2-diacyl-sn-glyceryl-L-cysteinyl-[prolipoprotein] + sn-glycerol 1-phosphate + H(+). The protein operates within protein modification; lipoprotein biosynthesis (diacylglyceryl transfer). Functionally, catalyzes the transfer of the diacylglyceryl group from phosphatidylglycerol to the sulfhydryl group of the N-terminal cysteine of a prolipoprotein, the first step in the formation of mature lipoproteins. The protein is Phosphatidylglycerol--prolipoprotein diacylglyceryl transferase of Wolbachia sp. subsp. Brugia malayi (strain TRS).